A 336-amino-acid polypeptide reads, in one-letter code: Biotin synthase (336 aa).

Residues Asn-54–Arg-281 enclose the Radical SAM core domain. [4Fe-4S] cluster-binding residues include Cys-69, Cys-73, and Cys-76. Cys-113, Cys-144, Cys-204, and Arg-276 together coordinate [2Fe-2S] cluster.

It belongs to the radical SAM superfamily. Biotin synthase family. Homodimer. It depends on [4Fe-4S] cluster as a cofactor. [2Fe-2S] cluster is required as a cofactor.

It carries out the reaction (4R,5S)-dethiobiotin + (sulfur carrier)-SH + 2 reduced [2Fe-2S]-[ferredoxin] + 2 S-adenosyl-L-methionine = (sulfur carrier)-H + biotin + 2 5'-deoxyadenosine + 2 L-methionine + 2 oxidized [2Fe-2S]-[ferredoxin]. Its pathway is cofactor biosynthesis; biotin biosynthesis; biotin from 7,8-diaminononanoate: step 2/2. Functionally, catalyzes the conversion of dethiobiotin (DTB) to biotin by the insertion of a sulfur atom into dethiobiotin via a radical-based mechanism. The polypeptide is Biotin synthase (Burkholderia pseudomallei (strain 1710b)).